The following is a 433-amino-acid chain: Probable M18 family aminopeptidase 2 (433 aa).

Residues H84, H161, and H409 each coordinate Zn(2+).

The protein belongs to the peptidase M18 family. The cofactor is Zn(2+).

The sequence is that of Probable M18 family aminopeptidase 2 from Clostridium novyi (strain NT).